A 46-amino-acid chain; its full sequence is Antimicrobial peptide eNAP-2 (46 aa).

The region spanning 12-46 is the WAP domain; that stretch reads RPGRCPTVPPGTFGHCACLCTGDASEPKGQKCCSN.

Its function is as follows. Has antibiotic activity against several equine uterine pathogens; S.zooepidemicus, E.coli and P.aeruginosa. Highly efficient against S.zoopedemicus. Not active against K.pneumoniae. Selectively inactivates microbial serine proteases (subtilisin A and proteinase K) without inhibiting mammalian serine proteases (human neutrophil elastase, human cathepsin G and bovine pancreatic trypsin). The polypeptide is Antimicrobial peptide eNAP-2 (Equus caballus (Horse)).